The primary structure comprises 102 residues: NADH-quinone oxidoreductase subunit K (102 aa).

Transmembrane regions (helical) follow at residues 6-26 (FEHA…ALLI), 30-50 (LIVM…AFIA), and 62-82 (VMFL…LGLG).

It belongs to the complex I subunit 4L family. In terms of assembly, NDH-1 is composed of 14 different subunits. Subunits NuoA, H, J, K, L, M, N constitute the membrane sector of the complex.

It is found in the cell inner membrane. The enzyme catalyses a quinone + NADH + 5 H(+)(in) = a quinol + NAD(+) + 4 H(+)(out). In terms of biological role, NDH-1 shuttles electrons from NADH, via FMN and iron-sulfur (Fe-S) centers, to quinones in the respiratory chain. The immediate electron acceptor for the enzyme in this species is believed to be ubiquinone. Couples the redox reaction to proton translocation (for every two electrons transferred, four hydrogen ions are translocated across the cytoplasmic membrane), and thus conserves the redox energy in a proton gradient. This chain is NADH-quinone oxidoreductase subunit K, found in Methylococcus capsulatus (strain ATCC 33009 / NCIMB 11132 / Bath).